A 359-amino-acid polypeptide reads, in one-letter code: Protein-glutamate methylesterase/protein-glutamine glutaminase 1 (359 aa).

Positions 4 to 121 constitute a Response regulatory domain; it reads SVLIVDDSAV…RAFLLEAAKE (118 aa). Asp-55 is subject to 4-aspartylphosphate. In terms of domain architecture, CheB-type methylesterase spans 169 to 354; that stretch reads YRTTEKIIAI…MSLERIAHML (186 aa). Residues Ser-181, His-207, and Asp-303 contribute to the active site.

Belongs to the CheB family. Phosphorylated by CheA. Phosphorylation of the N-terminal regulatory domain activates the methylesterase activity.

The protein resides in the cytoplasm. It carries out the reaction [protein]-L-glutamate 5-O-methyl ester + H2O = L-glutamyl-[protein] + methanol + H(+). It catalyses the reaction L-glutaminyl-[protein] + H2O = L-glutamyl-[protein] + NH4(+). Involved in chemotaxis. Part of a chemotaxis signal transduction system that modulates chemotaxis in response to various stimuli. Catalyzes the demethylation of specific methylglutamate residues introduced into the chemoreceptors (methyl-accepting chemotaxis proteins or MCP) by CheR. Also mediates the irreversible deamidation of specific glutamine residues to glutamic acid. This chain is Protein-glutamate methylesterase/protein-glutamine glutaminase 1, found in Chromobacterium violaceum (strain ATCC 12472 / DSM 30191 / JCM 1249 / CCUG 213 / NBRC 12614 / NCIMB 9131 / NCTC 9757 / MK).